The sequence spans 414 residues: Enolase (414 aa).

Gln162 is a (2R)-2-phosphoglycerate binding site. Glu204 serves as the catalytic Proton donor. Residues Asp239, Glu280, and Asp307 each contribute to the Mg(2+) site. Positions 332, 361, 362, and 383 each coordinate (2R)-2-phosphoglycerate. Lys332 serves as the catalytic Proton acceptor.

It belongs to the enolase family. Mg(2+) is required as a cofactor.

The protein resides in the cytoplasm. The protein localises to the secreted. It is found in the cell surface. The catalysed reaction is (2R)-2-phosphoglycerate = phosphoenolpyruvate + H2O. The protein operates within carbohydrate degradation; glycolysis; pyruvate from D-glyceraldehyde 3-phosphate: step 4/5. Functionally, catalyzes the reversible conversion of 2-phosphoglycerate (2-PG) into phosphoenolpyruvate (PEP). It is essential for the degradation of carbohydrates via glycolysis. In Campylobacter jejuni (strain RM1221), this protein is Enolase.